We begin with the raw amino-acid sequence, 269 residues long: MFTDTINKCAANAARIARLSANNPLGFWVSSAMAGAYVGLGIILIFTLGNLLDPSVRPLVMGATFGIALTLVIIAGSELFTGHTMFLTLGVKAGTISHGQMWAILPQTWLGNLVGSVFVALLYSWGGGSLLPVDTSIVHSVALAKTTAPATVLFFKGALCNWLVCLAIWMAIRTEGTAKFLAIWWCLLAFIASGYEHSVANMTLFALSWFGHHSDAYTLAGIGHNLLWVTLGNTLSGVVFMGLGYWYATPKSERPAPAKINQPEAAANN.

Topologically, residues 1–29 (MFTDTINKCAANAARIARLSANNPLGFWV) are cytoplasmic. A helical transmembrane segment spans residues 30 to 46 (SSAMAGAYVGLGIILIF). Residues 47-58 (TLGNLLDPSVRP) lie on the Extracellular side of the membrane. The helical transmembrane segment at 59-75 (LVMGATFGIALTLVIIA) threads the bilayer. Over 76-107 (GSELFTGHTMFLTLGVKAGTISHGQMWAILPQ) the chain is Cytoplasmic. The chain crosses the membrane as a helical span at residues 108–125 (TWLGNLVGSVFVALLYSW). Topologically, residues 126–153 (GGGSLLPVDTSIVHSVALAKTTAPATVL) are extracellular. Residues 154–172 (FFKGALCNWLVCLAIWMAI) form a helical membrane-spanning segment. The Cytoplasmic portion of the chain corresponds to 173–179 (RTEGTAK). A helical transmembrane segment spans residues 180–195 (FLAIWWCLLAFIASGY). Residues 196–230 (EHSVANMTLFALSWFGHHSDAYTLAGIGHNLLWVT) are Extracellular-facing. Residues 231-250 (LGNTLSGVVFMGLGYWYATP) traverse the membrane as a helical segment. The Cytoplasmic segment spans residues 251 to 269 (KSERPAPAKINQPEAAANN).

The protein belongs to the FNT transporter (TC 1.A.16) family.

It localises to the cell inner membrane. Its function is as follows. Catalyzes nitrite uptake and nitrite export across the cytoplasmic membrane. The sequence is that of Nitrite transporter NirC (nirC) from Salmonella typhimurium (strain LT2 / SGSC1412 / ATCC 700720).